Consider the following 489-residue polypeptide: Cytochrome P450 monooxygenase tazI (489 aa).

C433 serves as a coordination point for heme.

It belongs to the cytochrome P450 family. Requires heme as cofactor.

Its pathway is secondary metabolite biosynthesis. Cytochrome P450 monooxygenase; part of the gene cluster that mediates the biosynthesis of azaterrilone A and other azaphilones, a class of fungal metabolites characterized by a highly oxygenated pyrano-quinone bicyclic core and exhibiting a broad range of bioactivities. The first step of the pathway begins with the non-reducing polyketide synthase tazA that assembles one acetyl-CoA starter unit, five malonyl-CoA units, and catalyzes a series of Claisen condensations, methylation, PT-mediated cyclization, and finally releases the first hexaketide precursor through the R-domain. The tazA product then undergoes reduction on its terminal ketone and the following pyran-ring formation by yet undetermined enzyme(s). Dehydration and enoyl reduction, possibly involving the trans-enoyl reductase tazE leads to the next intermediate. TazD is predicted as an acetyltransferase and might catalyze the acetylation steps leading to the synthesis of azaterrilone A. Azaterrilone A is not the final product of the taz pathway and both the highly reducing polyketide synthase tazB and the dual enzyme tazHJ catalyze late steps of the pathway, leading to the production of the 2 final stereoisomers that contain additional polyketide modification whose structures have still to be determined. The chain is Cytochrome P450 monooxygenase tazI from Aspergillus terreus (strain NIH 2624 / FGSC A1156).